The following is a 453-amino-acid chain: Mogroside IIIx synthase (453 aa).

His-21 (proton acceptor) is an active-site residue. Asp-122 acts as the Charge relay in catalysis. Residues Ser-273, Gln-336, Trp-354, Asn-355, Ser-356, Glu-359, Asp-375, and Gln-376 each contribute to the UDP-alpha-D-glucose site.

The protein belongs to the UDP-glycosyltransferase family. As to expression, highly expressed in mature fruits.

The enzyme catalyses mogroside IIE + UDP-alpha-D-glucose = mogroside IIIX + UDP + H(+). It carries out the reaction mogroside III + UDP-alpha-D-glucose = mogroside IV + UDP + H(+). It catalyses the reaction mogroside III + UDP-alpha-D-glucose = siamenoside I + UDP + H(+). The catalysed reaction is mogroside IV + UDP-alpha-D-glucose = mogroside V + UDP + H(+). The protein operates within secondary metabolite biosynthesis; terpenoid biosynthesis. UDP-glycosyltransferase involved in the biosynthesis of cucurbitacin and mogroside tetracyclic triterpene natural products (e.g. siamenoside I and mogrosides IV, V and VI). Cucurbitacins have cytotoxic properties and exhibit deterrent taste as a defense barrier against herbivores. Mogrosides are nonsugar highly oxygenated compounds used as high-intensity zero-calorie sweeteners; they also possess pharmacological properties such as regulating immunity, lowering blood sugar and lipid levels, protecting the liver, and acting as antioxidants and antitumor agents. Catalyzes the branched glucosylations of mogroside II-E, mogroside III and mogroside IV. This chain is Mogroside IIIx synthase, found in Siraitia grosvenorii (Monk's fruit).